Reading from the N-terminus, the 348-residue chain is D-erythrose-4-phosphate dehydrogenase (348 aa).

NAD(+) is bound by residues 12–13 (RI) and R81. Substrate-binding positions include 154–156 (SCT), R200, 213–214 (TK), and R236. C155 functions as the Nucleophile in the catalytic mechanism. An NAD(+)-binding site is contributed by N318.

This sequence belongs to the glyceraldehyde-3-phosphate dehydrogenase family. Epd subfamily. Homotetramer.

It localises to the cytoplasm. The enzyme catalyses D-erythrose 4-phosphate + NAD(+) + H2O = 4-phospho-D-erythronate + NADH + 2 H(+). It functions in the pathway cofactor biosynthesis; pyridoxine 5'-phosphate biosynthesis; pyridoxine 5'-phosphate from D-erythrose 4-phosphate: step 1/5. In terms of biological role, catalyzes the NAD-dependent conversion of D-erythrose 4-phosphate to 4-phosphoerythronate. In Salmonella paratyphi B (strain ATCC BAA-1250 / SPB7), this protein is D-erythrose-4-phosphate dehydrogenase.